Reading from the N-terminus, the 617-residue chain is KIF-binding protein (617 aa).

The tract at residues 48–83 (ALLGPAPEDDDERAADDGPVDQALGAGEPRDAEGPG) is disordered. Position 174 is a phosphoserine (S174).

It belongs to the KIF-binding protein family. Interacts with KIF1B; positively regulates KIF1B microtubule motor activity. Interacts with STMN2.

Its subcellular location is the cytoplasm. It is found in the cytoskeleton. In terms of biological role, activator of KIF1B plus-end-directed microtubule motor activity. Required for organization of axonal microtubules, and axonal outgrowth and maintenance during peripheral and central nervous system development. In Rattus norvegicus (Rat), this protein is KIF-binding protein (Kifbp).